Reading from the N-terminus, the 79-residue chain is Small ribosomal subunit protein bS18 (79 aa).

This sequence belongs to the bacterial ribosomal protein bS18 family. As to quaternary structure, part of the 30S ribosomal subunit. Forms a tight heterodimer with protein bS6.

In terms of biological role, binds as a heterodimer with protein bS6 to the central domain of the 16S rRNA, where it helps stabilize the platform of the 30S subunit. The chain is Small ribosomal subunit protein bS18 from Streptococcus suis (strain 98HAH33).